Reading from the N-terminus, the 337-residue chain is DNA-directed RNA polymerase subunit alpha (337 aa).

The alpha N-terminal domain (alpha-NTD) stretch occupies residues 1–231 (MRNITISAYT…KQLSVFDKIT (231 aa)). The tract at residues 248–337 (NTKLLQNITD…IAELKAQNEG (90 aa)) is alpha C-terminal domain (alpha-CTD).

Belongs to the RNA polymerase alpha chain family. Homodimer. The RNAP catalytic core consists of 2 alpha, 1 beta, 1 beta' and 1 omega subunit. When a sigma factor is associated with the core the holoenzyme is formed, which can initiate transcription.

The catalysed reaction is RNA(n) + a ribonucleoside 5'-triphosphate = RNA(n+1) + diphosphate. Its function is as follows. DNA-dependent RNA polymerase catalyzes the transcription of DNA into RNA using the four ribonucleoside triphosphates as substrates. The sequence is that of DNA-directed RNA polymerase subunit alpha from Campylobacter jejuni subsp. doylei (strain ATCC BAA-1458 / RM4099 / 269.97).